Consider the following 1515-residue polypeptide: MSRNDQEPFLVKFLKSSDNSECFFKALESIKELQSEDYLQIITDEEALKIRENDKSLYICDRFSGTVFDHLKQLGCRIVGPQVVTFCMRHQQCVPRAEHPVYNMIMSDVTVSCTSLDKDKREEVHKYVQMMGGRVYRDLNVSVTHLIAGEVGSKKYLVAANLKKPILLPSWIKTLWEKSQEKKITKYTDVNMEDFKCPIFLGCIICVTGLNGIHRKTVQQLTAKHGGQYMGQLKMNECTHLIVQEPKGQKYECARRWNVHCVTLQWFHDSIEKGFCQDESIYKAETRVEAKMVPDTSTPTAQSNAESHTLADVSHISNINGSCVNETMFGSTTSKLECSLENLENLDISMFQAPEDLLDGCRIYLCGFSGRKLDKLRRLINSGGGVRFNQLNEDVTHVIVGDYDDDVRQFWSKSSHRPHVVGAKWLLECFTKGYILPEESYIHTNYQPAGIAVSDQPGNQTAVLDKSGSFSKSALVPAERLQQADEDLLAQYGNDDSTMVEAKLSEALEPEVGPCPGSAHREPCDDSTHISVQEENKSSVSHCILDDSTVREEGLFSQKSFLVLGFSVENKCNIVDIIREHAGKIVSLPSRIVADYAVVPLLGCEVDVTVGEVVTNTWLVTCIDNQTLVDPKSNPLFTPVSVMSGVTPLEDCVISFSQCVGAERDSLVFLANHLGASVQEFFVRKANAKKGMLASTHLIVKEPTGSKYEAAKKWSLPAVNISWLLETARIGKRADENHFLVDNAPKQEQVLETKIPNGVSSNPDLPAHPDAHLEIHRKKAVTPLDMNRFQSRAFRAVISQQRGQDPTFPPVRQPLTKEPSLHLDTPSKFLSKDKLFKPSFDVTDALAALETPNAASQKRKLSSPLSEVIVRNLTVALANSSRNTDSHSASPQLKGAHLEEEETRKPLDSVVVCVSKKLSKKQSELNGVAASLGAEYRWSFDETVTHFIYQGRANDSNREYKSAKERGVHIVSEHWLLECAQEYKHLPESLYPHTYNPKMSLDINTVQDGRLCNSRAPLAVSASKDDGPDHLSVEGNETNTMGTNDKESPLLNGSGRDDCKGALTQALEMRENFQKQLQEIMSATCIVKTPAQKTCMSRSSCNSASSTPDSARSVRSGRSRVLEALRQSRQAVPDVNTEPSQNEQIIWDDPTAREERARLASNLQWPSDPTQHSELQVEIKMPDDSPSRKPVYHSEIAEQASCVTQAPGHPGSEEPEPPVAERPLIPEPQAPAVASPLAKPPVAPQPADKIETQEETHRKVKKQYVFQMSSLNSQERIDYCRLIKDLGGSVIEKQCSDPSCTHMVVGYPLRNEKYLASMAAGKWVLHRSYLDACKTAGRFVQEEDYEWGSSSILDALPDVTEHQQKLALAAMRWRKRIQQSQESGIVEGAFSGWKAILRVDRPREAGFKRLLQAGGAKVLSGHPEPLLKDATHLFCDFNKLKPDDCRVFIAEATAQNMVCLKTEYIADYLMLESPPCADNYRVSEAALFHNKKGGPGLPQKRKTPAENVVKRPRVH.

BRCT domains follow at residues 101-189 and 195-284; these read VYNM…KYTD and FKCP…IYKA. Thr-298 is modified (phosphothreonine). BRCT domains lie at 353–443, 551–636, and 644–741; these read APED…SYIH, REEG…SNPL, and SGVT…HFLV. Residues 759 to 893 are interaction with CIP2A; sequence VSSNPDLPAH…TDSHSASPQL (135 aa). Thr-782 carries the post-translational modification Phosphothreonine. The disordered stretch occupies residues 799-826; sequence SQQRGQDPTFPPVRQPLTKEPSLHLDTP. Thr-851 is modified (phosphothreonine). 5 positions are modified to phosphoserine: Ser-862, Ser-863, Ser-866, Ser-888, and Ser-890. Over residues 880–891 the composition is skewed to polar residues; the sequence is SSRNTDSHSASP. A disordered region spans residues 880–901; sequence SSRNTDSHSASPQLKGAHLEEE. The BRCT 6 domain occupies 902–993; sequence ETRKPLDSVV…KHLPESLYPH (92 aa). The segment at 1020–1055 is disordered; the sequence is VSASKDDGPDHLSVEGNETNTMGTNDKESPLLNGSG. Over residues 1023–1032 the composition is skewed to basic and acidic residues; the sequence is SKDDGPDHLS. Residue Thr-1064 is modified to Phosphothreonine. Residues 1097–1116 show a composition bias toward low complexity; it reads SRSSCNSASSTPDSARSVRS. 3 disordered regions span residues 1097–1119, 1203–1255, and 1491–1515; these read SRSSCNSASSTPDSARSVRSGRS, VTQA…TQEE, and KKGGPGLPQKRKTPAENVVKRPRVH. Residues 1217-1229 show a composition bias toward pro residues; sequence PPVAERPLIPEPQ. In terms of domain architecture, BRCT 7 spans 1255–1347; that stretch reads ETHRKVKKQY…RFVQEEDYEW (93 aa). The Nuclear localization signal motif lies at 1510–1513; it reads KRPR.

The protein belongs to the TOPBP1 family. Interacts (via BRCT domains 1 and 2) with (phosphorylated) MDC1; promoting TOPBP1 recruitment to DNA damage sites during mitosis. Interacts (via BRCT domains 7 and 8) with (autophosphorylated) ATR; promoting activation of ATR. Interacts (via BRCT domains 7 and 8) with (phosphorylated) POLQ; specifically binds POLQ phosphorylated by PLK1, promoting POLQ recruitment to DNA damage sites. Interacts (via BRCT domains 1 and 2) with (phosphorylated) RAD9A. Interacts (via BRCT domain 2) with (phosphorylated) TP53BP1. Interacts (via BRCT domain 2) with (phosphorylated) HTATSF1. Interacts (via BRCT domains 7 and 8) with (phosphorylated) RAD51; promoting RAD51 recruitment to damaged chromatin. Interacts with CIP2A; forming the CIP2A-TOPBP1 complex. Interacts with POLE. Interacts with UBR5. Interacts with E2F1. Interacts with PML. Interacts with SMARCA2. Interacts with SMARCA4. Interacts with RHNO1. May interact with TOP2B. Interacts with TICRR. Interacts with HELB. Phosphorylated on serine and threonine residues in response to X-ray irradiation. Post-translationally, ubiquitinated and degraded by the proteasome. X-ray irradiation reduces ubiquitination. Deubiquitinated by USP13; leading to TOPBP1 stabilizion and activation of the ATR-TOPBP1 axis pathway. In terms of tissue distribution, highly expressed in testis.

Its subcellular location is the nucleus. It is found in the chromosome. It localises to the cytoplasm. The protein localises to the cytoskeleton. The protein resides in the microtubule organizing center. Its subcellular location is the centrosome. It is found in the spindle pole. In terms of biological role, scaffold protein that acts as a key protein-protein adapter in DNA replication and DNA repair. Composed of multiple BRCT domains, which specifically recognize and bind phosphorylated proteins, bringing proteins together into functional combinations. Required for DNA replication initiation but not for the formation of pre-replicative complexes or the elongation stages. Necessary for the loading of replication factors onto chromatin, including GMNC, CDC45, DNA polymerases and components of the GINS complex. Plays a central role in DNA repair by bridging proteins and promoting recruitment of proteins to DNA damage sites. Involved in double-strand break (DSB) repair via homologous recombination in S-phase by promoting the exchange between the DNA replication factor A (RPA) complex and RAD51. Mechanistically, TOPBP1 is recruited to DNA damage sites in S-phase via interaction with phosphorylated HTATSF1, and promotes the loading of RAD51, thereby facilitating RAD51 nucleofilaments formation and RPA displacement, followed by homologous recombination. Involved in microhomology-mediated end-joining (MMEJ) DNA repair by promoting recruitment of polymerase theta (POLQ) to DNA damage sites during mitosis. MMEJ is an alternative non-homologous end-joining (NHEJ) machinery that takes place during mitosis to repair DSBs in DNA that originate in S-phase. Recognizes and binds POLQ phosphorylated by PLK1, enabling its recruitment to DSBs for subsequent repair. Involved in G1 DNA damage checkpoint by acting as a molecular adapter that couples TP53BP1 and the 9-1-1 complex. In response to DNA damage, triggers the recruitment of checkpoint signaling proteins on chromatin, which activate the CHEK1 signaling pathway and block S-phase progression. Acts as an activator of the kinase activity of ATR. Also required for chromosomal stability when DSBs occur during mitosis by forming filamentous assemblies that bridge MDC1 and tether broken chromosomes during mitosis. Together with CIP2A, plays an essential role in the response to genome instability generated by the presence of acentric chromosome fragments derived from shattered chromosomes within micronuclei. Micronuclei, which are frequently found in cancer cells, consist of chromatin surrounded by their own nuclear membrane: following breakdown of the micronuclear envelope, a process associated with chromothripsis, the CIP2A-TOPBP1 complex tethers chromosome fragments during mitosis to ensure clustered segregation of the fragments to a single daughter cell nucleus, facilitating re-ligation with limited chromosome scattering and loss. Recruits the SWI/SNF chromatin remodeling complex to E2F1-responsive promoters, thereby down-regulating E2F1 activity and inhibiting E2F1-dependent apoptosis during G1/S transition and after DNA damage. The polypeptide is DNA topoisomerase 2-binding protein 1 (Mus musculus (Mouse)).